We begin with the raw amino-acid sequence, 511 residues long: Protein phosphatase 2C 16 (511 aa).

Residues 1 to 22 (MEEMTPAVAMTLSLAANTMCES) form the signal peptide. The PPM-type phosphatase domain maps to 189–501 (LWGTVSIQGN…DNISIIVIDL (313 aa)). Asp243, Gly244, Asp432, and Asp492 together coordinate Mn(2+).

This sequence belongs to the PP2C family. As to quaternary structure, interacts with SWI3B (via N-terminus). Interacts with ABA-bounded PYR1, PYL1, PYL2, PYL3, PYL4, PYL5, PYL6, PYL8 and PYL9, and with free PYL2, PYL3, PYL4, PYL10 and PYL13. Mg(2+) serves as cofactor. Requires Mn(2+) as cofactor. In terms of tissue distribution, expressed in seeds, roots, stems, leaves and flowers, especially in meristematic tissues, guard cells, embryo and siliques.

The protein localises to the cytoplasm. It localises to the nucleus. It carries out the reaction O-phospho-L-seryl-[protein] + H2O = L-seryl-[protein] + phosphate. It catalyses the reaction O-phospho-L-threonyl-[protein] + H2O = L-threonyl-[protein] + phosphate. With respect to regulation, repressed by PYR/PYL/RCAR ABA receptors in an ABA-dependent manner. In terms of biological role, key component and repressor of the abscisic acid (ABA) signaling pathway that regulates numerous ABA responses, such as stomatal closure, seed germination and inhibition of vegetative growth. Confers enhanced sensitivity to drought. The protein is Protein phosphatase 2C 16 (HAB1) of Arabidopsis thaliana (Mouse-ear cress).